The primary structure comprises 402 residues: Tryptophan synthase beta chain (402 aa).

At lysine 91 the chain carries N6-(pyridoxal phosphate)lysine.

Belongs to the TrpB family. Tetramer of two alpha and two beta chains. It depends on pyridoxal 5'-phosphate as a cofactor.

It catalyses the reaction (1S,2R)-1-C-(indol-3-yl)glycerol 3-phosphate + L-serine = D-glyceraldehyde 3-phosphate + L-tryptophan + H2O. It participates in amino-acid biosynthesis; L-tryptophan biosynthesis; L-tryptophan from chorismate: step 5/5. Its function is as follows. The beta subunit is responsible for the synthesis of L-tryptophan from indole and L-serine. The sequence is that of Tryptophan synthase beta chain from Streptococcus thermophilus (strain ATCC BAA-491 / LMD-9).